A 1368-amino-acid chain; its full sequence is DNA-directed RNA polymerase subunit beta (1368 aa).

Belongs to the RNA polymerase beta chain family. As to quaternary structure, the RNAP catalytic core consists of 2 alpha, 1 beta, 1 beta' and 1 omega subunit. When a sigma factor is associated with the core the holoenzyme is formed, which can initiate transcription.

The enzyme catalyses RNA(n) + a ribonucleoside 5'-triphosphate = RNA(n+1) + diphosphate. Functionally, DNA-dependent RNA polymerase catalyzes the transcription of DNA into RNA using the four ribonucleoside triphosphates as substrates. The protein is DNA-directed RNA polymerase subunit beta of Legionella pneumophila (strain Paris).